A 400-amino-acid chain; its full sequence is Nicotinate phosphoribosyltransferase (400 aa).

H220 bears the Phosphohistidine; by autocatalysis mark.

This sequence belongs to the NAPRTase family. Transiently phosphorylated on a His residue during the reaction cycle. Phosphorylation strongly increases the affinity for substrates and increases the rate of nicotinate D-ribonucleotide production. Dephosphorylation regenerates the low-affinity form of the enzyme, leading to product release.

The enzyme catalyses nicotinate + 5-phospho-alpha-D-ribose 1-diphosphate + ATP + H2O = nicotinate beta-D-ribonucleotide + ADP + phosphate + diphosphate. It functions in the pathway cofactor biosynthesis; NAD(+) biosynthesis; nicotinate D-ribonucleotide from nicotinate: step 1/1. Its function is as follows. Catalyzes the synthesis of beta-nicotinate D-ribonucleotide from nicotinate and 5-phospho-D-ribose 1-phosphate at the expense of ATP. This chain is Nicotinate phosphoribosyltransferase, found in Salmonella choleraesuis (strain SC-B67).